Reading from the N-terminus, the 265-residue chain is Gamma-secretase subunit APH-1A (265 aa).

The Lumenal segment spans residues 1–2; sequence MG. A helical membrane pass occupies residues 3-23; sequence AAVFFGCTFVAFGPAFSLFLI. Topologically, residues 24–31 are cytoplasmic; it reads TVAGDPLR. A helical transmembrane segment spans residues 32-52; sequence VIILVAGAFFWLVSLLLASVV. The Lumenal segment spans residues 53–68; that stretch reads WFILVHVTDRSDARLQ. A helical membrane pass occupies residues 69–89; sequence YGLLIFGAAVSVLLQEVFRFA. Over 90 to 118 the chain is Cytoplasmic; the sequence is YYKLLKKADEGLASLSEDGRSPISIRQMA. The helical transmembrane segment at 119-139 threads the bilayer; sequence YVSGLSFGIISGVFSVINILA. Over 140-158 the chain is Lumenal; that stretch reads DALGPGVVGIHGDSPYYFL. The chain crosses the membrane as a helical span at residues 159 to 179; it reads TSAFLTAAIILLHTFWGVVFF. Residues 180–186 are Cytoplasmic-facing; it reads DACERRR. Residues 187–207 form a helical membrane-spanning segment; it reads YWALGLVVGSHLLTSGLTFLN. The Lumenal portion of the chain corresponds to 208-213; that stretch reads PWYEAS. Residues 214-234 traverse the membrane as a helical segment; sequence LLPIYAVTVSMGLWAFITAGG. Over 235–265 the chain is Cytoplasmic; the sequence is SLRSIQRSLSCRRQEDSRVMVYSALRIPPED.

This sequence belongs to the APH-1 family. As to quaternary structure, the functional gamma-secretase complex is composed of at least four polypeptides: a presenilin homodimer (PSEN1 or PSEN2), nicastrin (NCSTN), APH1 (APH1A or APH1B) and PSENEN/PEN2.

The protein localises to the endoplasmic reticulum membrane. It is found in the golgi apparatus. Its subcellular location is the golgi stack membrane. Its function is as follows. Non-catalytic subunit of the gamma-secretase complex, an endoprotease complex that catalyzes the intramembrane cleavage of integral membrane proteins such as Notch receptors and APP (amyloid-beta precursor protein). Required for normal gamma-secretase assembly. The gamma-secretase complex plays a role in Notch and Wnt signaling cascades and regulation of downstream processes via its role in processing key regulatory proteins, and by regulating cytosolic CTNNB1 levels. The protein is Gamma-secretase subunit APH-1A (Aph1a) of Mus musculus (Mouse).